A 335-amino-acid polypeptide reads, in one-letter code: Eukaryotic translation initiation factor 3 subunit I (335 aa).

WD repeat units follow at residues Gly8–Thr47, Gly50–Asp91, Cys145–Asn184, Glu189–Thr228, and Gly286–Thr325.

This sequence belongs to the eIF-3 subunit I family. Component of the eukaryotic translation initiation factor 3 (eIF-3) complex.

The protein resides in the cytoplasm. In terms of biological role, component of the eukaryotic translation initiation factor 3 (eIF-3) complex, which is involved in protein synthesis of a specialized repertoire of mRNAs and, together with other initiation factors, stimulates binding of mRNA and methionyl-tRNAi to the 40S ribosome. The eIF-3 complex specifically targets and initiates translation of a subset of mRNAs involved in cell proliferation. The sequence is that of Eukaryotic translation initiation factor 3 subunit I (tif34) from Botryotinia fuckeliana (strain B05.10) (Noble rot fungus).